A 372-amino-acid polypeptide reads, in one-letter code: MDVESRLSLILRYPAEEVITVEELKEILQAGYKLNHYIGFEISGFIHIGTGVVSMSKVVDLQKAGVRTQILLADIHSWLNNKLGGDLETIRRVAVTYYVETFKKIIEVLGGDPDGTRFVLGSDLYHHNDEYWLLLMDITRHLTLSQVRHSLTILGRKMGESIPLAYLVYPPLQVADVFALGAHIPHGGIDQRRAHILAREVAHKIRFYPLEVDGKRVKPVALHHRLLPALNISAKPASKEELSELKMSKSIPQSAIFVHDSPEEIKQKIAKAYCPPREVEYNPVLELLRVSAFREERKTPFVIRRPAQYGGDVEVWSYQELEGLYREGKIHPADLKNAAAEALAGLLEPVYKFFQGPGAKLLEEMKNITITR.

Positions 37, 169, 173, 176, and 191 each coordinate L-tyrosine. Residues 246–250 carry the 'KMSKS' region motif; that stretch reads KMSKS. Position 249 (K249) interacts with ATP.

Belongs to the class-I aminoacyl-tRNA synthetase family. TyrS type 4 subfamily. In terms of assembly, homodimer.

Its subcellular location is the cytoplasm. The enzyme catalyses tRNA(Tyr) + L-tyrosine + ATP = L-tyrosyl-tRNA(Tyr) + AMP + diphosphate + H(+). Functionally, catalyzes the attachment of tyrosine to tRNA(Tyr) in a two-step reaction: tyrosine is first activated by ATP to form Tyr-AMP and then transferred to the acceptor end of tRNA(Tyr). This chain is Tyrosine--tRNA ligase, found in Pyrobaculum arsenaticum (strain DSM 13514 / JCM 11321 / PZ6).